We begin with the raw amino-acid sequence, 264 residues long: Glutamate racemase (264 aa).

Substrate contacts are provided by residues 10–11 (DS) and 42–43 (YG). The active-site Proton donor/acceptor is Cys-73. 74–75 (NT) contributes to the substrate binding site. Cys-183 functions as the Proton donor/acceptor in the catalytic mechanism. 184–185 (TH) serves as a coordination point for substrate.

This sequence belongs to the aspartate/glutamate racemases family.

The catalysed reaction is L-glutamate = D-glutamate. Its pathway is cell wall biogenesis; peptidoglycan biosynthesis. In terms of biological role, provides the (R)-glutamate required for cell wall biosynthesis. In Streptococcus pneumoniae serotype 19F (strain G54), this protein is Glutamate racemase.